The chain runs to 133 residues: DNA-directed RNA polymerase subunit omega (133 aa).

This sequence belongs to the RNA polymerase subunit omega family. In terms of assembly, the RNAP catalytic core consists of 2 alpha, 1 beta, 1 beta' and 1 omega subunit. When a sigma factor is associated with the core the holoenzyme is formed, which can initiate transcription.

It carries out the reaction RNA(n) + a ribonucleoside 5'-triphosphate = RNA(n+1) + diphosphate. Its function is as follows. Promotes RNA polymerase assembly. Latches the N- and C-terminal regions of the beta' subunit thereby facilitating its interaction with the beta and alpha subunits. The chain is DNA-directed RNA polymerase subunit omega from Mesorhizobium japonicum (strain LMG 29417 / CECT 9101 / MAFF 303099) (Mesorhizobium loti (strain MAFF 303099)).